A 428-amino-acid chain; its full sequence is Serine--tRNA ligase (428 aa).

231–233 serves as a coordination point for L-serine; sequence TAE. ATP is bound at residue 262–264; that stretch reads RSE. E285 is a binding site for L-serine. Residue 349-352 coordinates ATP; the sequence is EISS. S385 serves as a coordination point for L-serine.

The protein belongs to the class-II aminoacyl-tRNA synthetase family. Type-1 seryl-tRNA synthetase subfamily. As to quaternary structure, homodimer. The tRNA molecule binds across the dimer.

It is found in the cytoplasm. The catalysed reaction is tRNA(Ser) + L-serine + ATP = L-seryl-tRNA(Ser) + AMP + diphosphate + H(+). The enzyme catalyses tRNA(Sec) + L-serine + ATP = L-seryl-tRNA(Sec) + AMP + diphosphate + H(+). The protein operates within aminoacyl-tRNA biosynthesis; selenocysteinyl-tRNA(Sec) biosynthesis; L-seryl-tRNA(Sec) from L-serine and tRNA(Sec): step 1/1. In terms of biological role, catalyzes the attachment of serine to tRNA(Ser). Is also able to aminoacylate tRNA(Sec) with serine, to form the misacylated tRNA L-seryl-tRNA(Sec), which will be further converted into selenocysteinyl-tRNA(Sec). This chain is Serine--tRNA ligase, found in Staphylococcus aureus (strain MW2).